The following is a 547-amino-acid chain: Chaperonin GroEL (547 aa).

ATP-binding positions include 30–33 (TLGP), lysine 51, 87–91 (DGTTT), glycine 415, and aspartate 495.

The protein belongs to the chaperonin (HSP60) family. In terms of assembly, forms a cylinder of 14 subunits composed of two heptameric rings stacked back-to-back. Interacts with the co-chaperonin GroES.

It localises to the cytoplasm. The enzyme catalyses ATP + H2O + a folded polypeptide = ADP + phosphate + an unfolded polypeptide.. Functionally, together with its co-chaperonin GroES, plays an essential role in assisting protein folding. The GroEL-GroES system forms a nano-cage that allows encapsulation of the non-native substrate proteins and provides a physical environment optimized to promote and accelerate protein folding. This Thiobacillus denitrificans (strain ATCC 25259 / T1) protein is Chaperonin GroEL.